A 237-amino-acid chain; its full sequence is Orotidine 5'-phosphate decarboxylase (237 aa).

Residues aspartate 11, lysine 34, 61-70, threonine 124, arginine 186, glutamine 195, glycine 215, and arginine 216 contribute to the substrate site; that span reads DLKLHDIPNT. Lysine 63 serves as the catalytic Proton donor.

It belongs to the OMP decarboxylase family. Type 1 subfamily. In terms of assembly, homodimer.

The enzyme catalyses orotidine 5'-phosphate + H(+) = UMP + CO2. The protein operates within pyrimidine metabolism; UMP biosynthesis via de novo pathway; UMP from orotate: step 2/2. Catalyzes the decarboxylation of orotidine 5'-monophosphate (OMP) to uridine 5'-monophosphate (UMP). The chain is Orotidine 5'-phosphate decarboxylase from Lactococcus lactis subsp. cremoris (strain MG1363).